We begin with the raw amino-acid sequence, 594 residues long: Type IV inositol polyphosphate 5-phosphatase 7 (594 aa).

The interval 246 to 300 is disordered; the sequence is FRCGHRPSDYSRRPSDYSRPSDYYSRPSNYSRPSDVSRWGSSDDDNGPGDSPSTF. The span at 251-261 shows a compositional bias: basic and acidic residues; that stretch reads RPSDYSRRPSD. Low complexity predominate over residues 262–279; sequence YSRPSDYYSRPSNYSRPS. Catalytic regions lie at residues 435–450 and 515–530; these read DRVI…IALS and KRRT…WHGE.

It belongs to the inositol polyphosphate 5-phosphatase family. As to expression, broadly expressed in emerging organs. Mostly localized in procambium of growing organs. Restricted to vascular differentiating cells of young organs.

It localises to the nucleus. The protein resides in the cell membrane. The enzyme catalyses a 1,2-diacyl-sn-glycero-3-phospho-(1D-myo-inositol-4,5-bisphosphate) + H2O = a 1,2-diacyl-sn-glycero-3-phospho-(1D-myo-inositol 4-phosphate) + phosphate. It catalyses the reaction a 1,2-diacyl-sn-glycero-3-phospho-(1D-myo-inositol-3,4,5-trisphosphate) + H2O = a 1,2-diacyl-sn-glycero-3-phospho-(1D-myo-inositol-3,4-bisphosphate) + phosphate. Has phosphatase activity toward PtdIns(4,5)P2 and at a lower extent toward PtdIns(3,4,5)P3 but not toward Ins(1,4,5)P3. Acts redundantly with CVP2 for maintaining vascular continuity. Regulates phosphoinositide-dependent VAN3 localization. Functions in salt stress response by regulating reactive oxygen species (ROS) production and stress-responsive genes expression. This Arabidopsis thaliana (Mouse-ear cress) protein is Type IV inositol polyphosphate 5-phosphatase 7.